The sequence spans 114 residues: MSKSYNQRQRKKLHLAEFQELGFLVNFQFAEGTAIETVDETVDRFINEVIQPNGLAYEGSGYLHWEGLVCLEKIGKCDESHRETVKKWLETNGLQQIEVSELFDIWWEYPTKVE.

The protein to E.coli YggL.

This is an uncharacterized protein from Haemophilus influenzae (strain ATCC 51907 / DSM 11121 / KW20 / Rd).